Consider the following 171-residue polypeptide: Large ribosomal subunit protein uL10 (171 aa).

It belongs to the universal ribosomal protein uL10 family. In terms of assembly, part of the ribosomal stalk of the 50S ribosomal subunit. The N-terminus interacts with L11 and the large rRNA to form the base of the stalk. The C-terminus forms an elongated spine to which L12 dimers bind in a sequential fashion forming a multimeric L10(L12)X complex.

Its function is as follows. Forms part of the ribosomal stalk, playing a central role in the interaction of the ribosome with GTP-bound translation factors. This is Large ribosomal subunit protein uL10 from Sphingopyxis alaskensis (strain DSM 13593 / LMG 18877 / RB2256) (Sphingomonas alaskensis).